A 174-amino-acid polypeptide reads, in one-letter code: Large ribosomal subunit protein uL10 (174 aa).

It belongs to the universal ribosomal protein uL10 family. Part of the ribosomal stalk of the 50S ribosomal subunit. The N-terminus interacts with L11 and the large rRNA to form the base of the stalk. The C-terminus forms an elongated spine to which L12 dimers bind in a sequential fashion forming a multimeric L10(L12)X complex.

Forms part of the ribosomal stalk, playing a central role in the interaction of the ribosome with GTP-bound translation factors. The chain is Large ribosomal subunit protein uL10 from Vesicomyosocius okutanii subsp. Calyptogena okutanii (strain HA).